The following is a 99-amino-acid chain: MITAELTVIPLGTCSTSLSSYVAAAVEALKKLNVRYEISGMGTLLEAEDLDELMEAVKAAHEAVLQAGSDRVYTTLKIDDRRDADRGLRDKVESVKEKI.

It belongs to the UPF0045 family. As to quaternary structure, homotetramer.

In Methanothermobacter thermautotrophicus (strain ATCC 29096 / DSM 1053 / JCM 10044 / NBRC 100330 / Delta H) (Methanobacterium thermoautotrophicum), this protein is UPF0045 protein MTH_1187.